The sequence spans 268 residues: Tryptophan synthase alpha chain (268 aa).

Residues Glu-49 and Asp-60 each act as proton acceptor in the active site.

It belongs to the TrpA family. In terms of assembly, tetramer of two alpha and two beta chains.

The enzyme catalyses (1S,2R)-1-C-(indol-3-yl)glycerol 3-phosphate + L-serine = D-glyceraldehyde 3-phosphate + L-tryptophan + H2O. It functions in the pathway amino-acid biosynthesis; L-tryptophan biosynthesis; L-tryptophan from chorismate: step 5/5. The alpha subunit is responsible for the aldol cleavage of indoleglycerol phosphate to indole and glyceraldehyde 3-phosphate. This Escherichia coli O1:K1 / APEC protein is Tryptophan synthase alpha chain.